A 490-amino-acid polypeptide reads, in one-letter code: MAKKAKKDGRSVEPTGNPILEVKYNDPLFSIAAHPTEPIFVSGLATGHVFCNRYDAERLEERMQAIKDEQKKKSKTSVKTTNAAWWTQVEDITNTDEIVTCWKTKRHKGSCRSVLFDPIESSVGKHLFTVGKDHVVKKANTETGKVLTKTDISKDLSSKDAVTKLCHSTTHPFLLSGTENGHVLVYDSNDLSNKFKVENVHEDAVNHILAMPSVSPYHYLTVGSTTLSHIDIRKGIVTQSDDQEDELLSMSFVPDDDRNDTVLVSHGGGIVTIWKNSKNKLMDQLSRIKVNKEASIDVMISAMDAGDDDMAASVWCGDSDGLVHRVNYKKGKVVETRLHGTADEVGFLDIDYEYRLLTAGMDSMKLWSAEGDDEEEEESEGEESEESEESDEESDESSGEESEGDDGNGSNSEESDSNDEDEVESSDDEKEKEEESTETDHKNIEAESGKQANKRQASQPKSAGENVKKQKLKQTSKLAHSHGIRRFDGL.

7 WD repeats span residues 23-64 (KYND…ERMQ), 70-112 (QKKK…GSCR), 118-155 (PIES…ISKD), 157-196 (SSKD…NKFK), 242-284 (DQED…LMDQ), 286-327 (SRIK…HRVN), and 340-377 (GTAD…EEEE). Positions 368 to 490 (SAEGDDEEEE…SHGIRRFDGL (123 aa)) are disordered. 2 stretches are compositionally biased toward acidic residues: residues 370–406 (EGDD…EGDD) and 413–437 (EESD…EEST). The span at 438–448 (ETDHKNIEAES) shows a compositional bias: basic and acidic residues. The segment covering 450 to 461 (KQANKRQASQPK) has biased composition (polar residues). Residues 469-484 (KQKLKQTSKLAHSHGI) are compositionally biased toward basic residues.

It belongs to the WD repeat WDR55 family.

It is found in the nucleus. Its subcellular location is the nucleolus. The sequence is that of WD repeat-containing protein JIP5 (JIP5) from Meyerozyma guilliermondii (strain ATCC 6260 / CBS 566 / DSM 6381 / JCM 1539 / NBRC 10279 / NRRL Y-324) (Yeast).